Consider the following 876-residue polypeptide: DNA polymerase I (876 aa).

Residues 1–310 (MKNKLVLIDG…FAIADSVTDE (310 aa)) form the 5'-3' exonuclease domain. Residues 289 to 876 (TDEGEKPLAG…HYGPTWYDAK (588 aa)) form a subtilisin large fragment region. Positions 469–876 (EQDRLLTELE…HYGPTWYDAK (408 aa)) are polymerase.

The protein belongs to the DNA polymerase type-A family. In terms of assembly, single-chain monomer with multiple functions.

The catalysed reaction is DNA(n) + a 2'-deoxyribonucleoside 5'-triphosphate = DNA(n+1) + diphosphate. Functionally, in addition to polymerase activity, the recombinant enzyme has strand displacement and 5'-3' exonuclease activity, but lacks proofreading 3'-5' exonuclease activity. The polypeptide is DNA polymerase I (polA) (Geobacillus stearothermophilus (Bacillus stearothermophilus)).